A 458-amino-acid chain; its full sequence is Argininosuccinate lyase (458 aa).

The protein belongs to the lyase 1 family. Argininosuccinate lyase subfamily.

The protein localises to the cytoplasm. The enzyme catalyses 2-(N(omega)-L-arginino)succinate = fumarate + L-arginine. It functions in the pathway amino-acid biosynthesis; L-arginine biosynthesis; L-arginine from L-ornithine and carbamoyl phosphate: step 3/3. The polypeptide is Argininosuccinate lyase (Hydrogenobaculum sp. (strain Y04AAS1)).